A 164-amino-acid polypeptide reads, in one-letter code: Dehydrin Rab16B (164 aa).

A disordered region spans residues 1–164 (MENYQGQHGY…KIKEKLPGQH (164 aa)). The span at 25–53 (GQYGGGATAPGGGHGAMGMGGHAGAGAGG) shows a compositional bias: gly residues. Residues 107-117 (GNNQQQQQMMG) are compositionally biased toward low complexity. Basic and acidic residues predominate over residues 147–164 (GEKKGFMDKIKEKLPGQH).

It belongs to the plant dehydrin family.

This chain is Dehydrin Rab16B (RAB16B), found in Oryza sativa subsp. indica (Rice).